We begin with the raw amino-acid sequence, 114 residues long: UPF0342 protein LSEI_1724 (114 aa).

The protein belongs to the UPF0342 family.

The polypeptide is UPF0342 protein LSEI_1724 (Lacticaseibacillus paracasei (strain ATCC 334 / BCRC 17002 / CCUG 31169 / CIP 107868 / KCTC 3260 / NRRL B-441) (Lactobacillus paracasei)).